A 237-amino-acid polypeptide reads, in one-letter code: Ergosterol biosynthesis protein 29 (237 aa).

A helical transmembrane segment spans residues 36–56 (ITLFLIVVGTLAFFNELYITI).

The protein localises to the endoplasmic reticulum membrane. In terms of biological role, part of the third module of ergosterol biosynthesis pathway that includes the late steps of the pathway. ERG29 regulates the activity of the iron-containing C4-methylsterol oxidase ERG25. The third module or late pathway involves the ergosterol synthesis itself through consecutive reactions that mainly occur in the endoplasmic reticulum (ER) membrane. Firstly, the squalene synthase ERG9 catalyzes the condensation of 2 farnesyl pyrophosphate moieties to form squalene, which is the precursor of all steroids. Squalene synthase is crucial for balancing the incorporation of farnesyl diphosphate (FPP) into sterol and nonsterol isoprene synthesis. Secondly, the squalene epoxidase ERG1 catalyzes the stereospecific oxidation of squalene to (S)-2,3-epoxysqualene, which is considered to be a rate-limiting enzyme in steroid biosynthesis. Then, the lanosterol synthase ERG7 catalyzes the cyclization of (S)-2,3 oxidosqualene to lanosterol, a reaction that forms the sterol core. In the next steps, lanosterol is transformed to zymosterol through a complex process involving various demethylation, reduction and desaturation reactions. The lanosterol 14-alpha-demethylase ERG11 (also known as CYP51) catalyzes C14-demethylation of lanosterol to produce 4,4'-dimethyl cholesta-8,14,24-triene-3-beta-ol, which is critical for ergosterol biosynthesis. The C-14 reductase ERG24 reduces the C14=C15 double bond of 4,4-dimethyl-cholesta-8,14,24-trienol to produce 4,4-dimethyl-cholesta-8,24-dienol. 4,4-dimethyl-cholesta-8,24-dienol is substrate of the C-4 demethylation complex ERG25-ERG26-ERG27 in which ERG25 catalyzes the three-step monooxygenation required for the demethylation of 4,4-dimethyl and 4alpha-methylsterols, ERG26 catalyzes the oxidative decarboxylation that results in a reduction of the 3-beta-hydroxy group at the C-3 carbon to an oxo group, and ERG27 is responsible for the reduction of the keto group on the C-3. ERG28 has a role as a scaffold to help anchor ERG25, ERG26 and ERG27 to the endoplasmic reticulum and ERG29 regulates the activity of the iron-containing C4-methylsterol oxidase ERG25. Then, the sterol 24-C-methyltransferase ERG6 catalyzes the methyl transfer from S-adenosyl-methionine to the C-24 of zymosterol to form fecosterol. The C-8 sterol isomerase ERG2 catalyzes the reaction which results in unsaturation at C-7 in the B ring of sterols and thus converts fecosterol to episterol. The sterol-C5-desaturase ERG3 then catalyzes the introduction of a C-5 double bond in the B ring to produce 5-dehydroepisterol. The C-22 sterol desaturase ERG5 further converts 5-dehydroepisterol into ergosta-5,7,22,24(28)-tetraen-3beta-ol by forming the C-22(23) double bond in the sterol side chain. Finally, ergosta-5,7,22,24(28)-tetraen-3beta-ol is substrate of the C-24(28) sterol reductase ERG4 to produce ergosterol. Its function is as follows. Plays a role in maintaining mitochondrial and plasma membrane integrity and consequently impacting the iron homeostasis, respiratory metabolism and antioxidant response. This chain is Ergosterol biosynthesis protein 29, found in Saccharomyces cerevisiae (strain ATCC 204508 / S288c) (Baker's yeast).